Here is a 271-residue protein sequence, read N- to C-terminus: Formamidopyrimidine-DNA glycosylase (271 aa).

Residue Pro2 is the Schiff-base intermediate with DNA of the active site. Glu3 functions as the Proton donor in the catalytic mechanism. Lys57 (proton donor; for beta-elimination activity) is an active-site residue. Positions 90, 109, and 151 each coordinate DNA. The FPG-type zinc finger occupies 236 to 270 (HVYGRGGKTCTQCGHMLSEIKLGQRATVFCSLCQQ). The active-site Proton donor; for delta-elimination activity is Arg260.

This sequence belongs to the FPG family. In terms of assembly, monomer. It depends on Zn(2+) as a cofactor.

It carries out the reaction Hydrolysis of DNA containing ring-opened 7-methylguanine residues, releasing 2,6-diamino-4-hydroxy-5-(N-methyl)formamidopyrimidine.. The catalysed reaction is 2'-deoxyribonucleotide-(2'-deoxyribose 5'-phosphate)-2'-deoxyribonucleotide-DNA = a 3'-end 2'-deoxyribonucleotide-(2,3-dehydro-2,3-deoxyribose 5'-phosphate)-DNA + a 5'-end 5'-phospho-2'-deoxyribonucleoside-DNA + H(+). In terms of biological role, involved in base excision repair of DNA damaged by oxidation or by mutagenic agents. Acts as a DNA glycosylase that recognizes and removes damaged bases. Has a preference for oxidized purines, such as 7,8-dihydro-8-oxoguanine (8-oxoG). Has AP (apurinic/apyrimidinic) lyase activity and introduces nicks in the DNA strand. Cleaves the DNA backbone by beta-delta elimination to generate a single-strand break at the site of the removed base with both 3'- and 5'-phosphates. The sequence is that of Formamidopyrimidine-DNA glycosylase from Shewanella pealeana (strain ATCC 700345 / ANG-SQ1).